We begin with the raw amino-acid sequence, 202 residues long: Solute carrier family 66 member 3 (202 aa).

The N-terminal stretch at 1–19 (MEAGLLWFCNWSTLGVCAA) is a signal peptide. Helical transmembrane passes span 33-53 (SARG…LVFL), 64-84 (LTYL…LFVF), 94-114 (LPYM…KWII), and 171-191 (LTIL…TATV).

It localises to the membrane. This Mus musculus (Mouse) protein is Solute carrier family 66 member 3 (Slc66a3).